A 324-amino-acid chain; its full sequence is IDS-like terpene synthase 1 (324 aa).

Residues D77 and D81 each contribute to the Mg(2+) site.

It belongs to the FPP/GGPP synthase family. Mg(2+) is required as a cofactor.

The enzyme catalyses (2E)-geranyl diphosphate = (E)-beta-ocimene + diphosphate. It carries out the reaction (2E)-geranyl diphosphate + H2O = linalool + diphosphate. It catalyses the reaction (2E,6E)-farnesyl diphosphate = (3E,6E)-alpha-farnesene + diphosphate. The catalysed reaction is (2E,6E,10E)-geranylgeranyl diphosphate = (E,E,E)-alpha-springene + diphosphate. Functionally, terpene synthase that shows monoterpene synthase activity and produces (E)-beta-ocimene as a major product and linalool as a minor product, using geranyl diphosphate (GPP) as substrate. Also shows sesquiterpene synthase activity as it is able to convert farnesyl diphosphate (FPP) into (E,E)-alpha-farnesene. Finally, TPS1 can convert geranylgeranyl diphosphate into (E,E,E)-alpha-springene. In Melampsora larici-populina (strain 98AG31 / pathotype 3-4-7) (Poplar leaf rust fungus), this protein is IDS-like terpene synthase 1.